Consider the following 487-residue polypeptide: ATP synthase subunit beta, plastid (487 aa).

169 to 176 contributes to the ATP binding site; that stretch reads GGAGVGKT.

This sequence belongs to the ATPase alpha/beta chains family. F-type ATPases have 2 components, CF(1) - the catalytic core - and CF(0) - the membrane proton channel. CF(1) has five subunits: alpha(3), beta(3), gamma(1), delta(1), epsilon(1). CF(0) has four main subunits: a(1), b(1), b'(1) and c(9-12).

The protein resides in the plastid membrane. The catalysed reaction is ATP + H2O + 4 H(+)(in) = ADP + phosphate + 5 H(+)(out). Functionally, produces ATP from ADP in the presence of a proton gradient across the membrane. The catalytic sites are hosted primarily by the beta subunits. The sequence is that of ATP synthase subunit beta, plastid (atpB) from Cuscuta pentagona (Five-angled dodder).